The following is a 668-amino-acid chain: Bestrophin-3 (668 aa).

Residues 1 to 31 are Cytoplasmic-facing; it reads MTVTYSSKVANATFFGFHRLLLKWRGSIYKL. A10 is a binding site for Ca(2+). Residues 32 to 51 form a helical membrane-spanning segment; the sequence is LYREFIVFAVLYTAISLVYR. The Extracellular portion of the chain corresponds to 52-60; sequence LLLTGVQKR. The helical transmembrane segment at 61–82 threads the bilayer; that stretch reads YFEKLSIYCDRYAEQIPVTFVL. Over 83 to 237 the chain is Cytoplasmic; sequence GFYVTLVVNR…DWVGIPLVYT (155 aa). A helical membrane pass occupies residues 238-255; that stretch reads QVVTLAVYTFFFACLIGR. The Extracellular segment spans residues 256-274; the sequence is QFLDPTKGYAGHDLDLYIP. A helical transmembrane segment spans residues 275-288; sequence IFTLLQFFFYAGWL. Over 289–668 the chain is Cytoplasmic; it reads KVAEQLINPF…LNKETEESPK (380 aa). Ca(2+) contacts are provided by Q293, N296, D301, and D304. Disordered regions lie at residues 400 to 454, 473 to 493, and 532 to 570; these read SAHE…KKSC, RETS…VRTS, and TGVQ…VSAS. A compositionally biased stretch (basic and acidic residues) spans 425–436; sequence PRDDLSPARDLL. Over residues 475–489 the composition is skewed to low complexity; sequence TSQTSTLQSLTPQSS. Positions 532–545 are enriched in polar residues; the sequence is TGVQPSKTEQQQGP.

This sequence belongs to the anion channel-forming bestrophin (TC 1.A.46) family. Calcium-sensitive chloride channel subfamily. In terms of tissue distribution, present in skeletal muscle and weakly in brain, spinal cord, bone marrow and retina.

Its subcellular location is the cell membrane. The enzyme catalyses chloride(in) = chloride(out). Ligand-gated anion channel that allows the movement of chloride monoatomic anions across cell membranes when activated by calcium (Ca2+). This Homo sapiens (Human) protein is Bestrophin-3.